Consider the following 423-residue polypeptide: tRNA-dihydrouridine(16/17) synthase [NAD(P)(+)] (423 aa).

At T2 the chain carries N-acetylthreonine. FMN-binding positions include 35–37 (PMV) and Q92. C121 (proton donor) is an active-site residue. Residues K160, H188, 223–225 (NGN), and 247–248 (AE) each bind FMN. Positions 404 to 423 (KKRKADVPLESADKKKDVKA) are disordered. Residues 408-423 (ADVPLESADKKKDVKA) show a composition bias toward basic and acidic residues.

Belongs to the Dus family. Dus1 subfamily. As to quaternary structure, monomer. The cofactor is FMN.

It catalyses the reaction 5,6-dihydrouridine(16) in tRNA + NADP(+) = uridine(16) in tRNA + NADPH + H(+). The enzyme catalyses 5,6-dihydrouridine(16) in tRNA + NAD(+) = uridine(16) in tRNA + NADH + H(+). It carries out the reaction 5,6-dihydrouridine(17) in tRNA + NAD(+) = uridine(17) in tRNA + NADH + H(+). The catalysed reaction is 5,6-dihydrouridine(17) in tRNA + NADP(+) = uridine(17) in tRNA + NADPH + H(+). It catalyses the reaction a 5,6-dihydrouridine in mRNA + NAD(+) = a uridine in mRNA + NADH + H(+). The enzyme catalyses a 5,6-dihydrouridine in mRNA + NADP(+) = a uridine in mRNA + NADPH + H(+). In terms of biological role, catalyzes the synthesis of dihydrouridine, a modified base found in the D-loop of most tRNAs. Specifically modifies U16 and U17 in cytoplasmic tRNAs. Also able to mediate dihydrouridylation of some mRNAs, thereby affecting their translation. The sequence is that of tRNA-dihydrouridine(16/17) synthase [NAD(P)(+)] from Saccharomyces cerevisiae (strain ATCC 204508 / S288c) (Baker's yeast).